Consider the following 241-residue polypeptide: DNA-binding dual master transcriptional regulator RpaA (241 aa).

Positions 3 to 119 (RILIIDDDPA…EMLARVRALL (117 aa)) constitute a Response regulatory domain. Aspartate 52 is subject to 4-aspartylphosphate. The ompR/PhoB-type DNA-binding region spans 132–231 (SEILNQGPLT…VYGAGYCLEL (100 aa)).

As to quaternary structure, interacts with reduced ferredoxin (petF). Interacts with CikA, RpaB, SasA, Sll0038 (pixG) and a number of other proteins. Post-translationally, phosphorylated by SasA; phosphorylation is maximal when KaiC phosphorylation is active during the circadian cycle. Dephosphorylated by CikA. CikA and SasA cooperation generates RpaA activity oscillation that is distinct from that generated by CikA or SasA alone and offset from the rhythm of KaiC phosphorylation.

The protein resides in the cytoplasm. Response regulator of 2 two-component regulatory systems SasA/RpaA and CikA/RpaA involved in genome-wide circadian gene expression. The histidine kinases have opposing effects modulated by the clock oscillator proteins; SasA phosphorylates RpaA (stimulated by fully phosphorylated KaiC1) while CikA dephosphorylates phospho-RpaA (stimulated by the phospho-Ser-432-KaiC1-KaiB complex). Its function is as follows. The RpaA regulon is about 300 genes, and includes itself, cikA, sigE, sigG, genes involved in photosynthesis, carbon metabolism in the light and dark, phototaxis, CRISPR arrays 2 and 3 as well as nearly 90 ncRNAs. Genes are up- or down-regulated in its absence. Involved in regulation of primary sugar and amino acid metabolism and in adaptation to light changes. Regulates the accumulation of the monomeric photosystem I and the D1 protein under high light conditions. Overexpression causes cells to grow more slowly, increases levels of transcripts for clock oscillator genes in the light and the dark, increases levels of SigE protein, increases accumulation of sugar catabolic enzymes in the dark with concomitant decreases in most sugar metabolites. Plays a role in cell division; overexpression from the psbAII promoter increases expression of some cell-division-related genes, alters cell volume and changes the outer cell membrane and cell wall appearance. This is DNA-binding dual master transcriptional regulator RpaA from Synechocystis sp. (strain ATCC 27184 / PCC 6803 / Kazusa).